Here is a 669-residue protein sequence, read N- to C-terminus: Glycerol uptake/efflux facilitator protein (669 aa).

Polar residues predominate over residues 1–16; the sequence is MSNPQKALNDFLSSES. Disordered regions lie at residues 1–99 and 123–147; these read MSNP…TYVP and QDIN…RGQT. At 1–254 the chain is on the extracellular side; it reads MSNPQKALND…WSSVKNTYLK (254 aa). Low complexity predominate over residues 50 to 68; it reads NNNNNNNNNNNNSNNNNNG. The segment covering 72–81 has biased composition (acidic residues); sequence GNDDDYDYEM. Polar residues-rich tracts occupy residues 87 to 99 and 133 to 147; these read SPQS…TYVP and PSAS…RGQT. A Phosphoserine modification is found at serine 150. The disordered stretch occupies residues 167 to 215; it reads HTIPESHLSRRRSRSRATSNAGHSANTGATNGRTTGAQTNMESNESPRN. Threonine 168 carries the phosphothreonine modification. Positions 191–206 are enriched in low complexity; it reads ANTGATNGRTTGAQTN. Phosphoserine is present on residues serine 209 and serine 212. Residues 255 to 275 form a helical membrane-spanning segment; that stretch reads EFLAEFMGTMVMIIFGSAVVC. Residues 276–325 are Cytoplasmic-facing; that stretch reads QVNVAGKIQQDNFNVALDNLNVTGSSAETIDAMKSLTSLVSSVAGGTFDD. The chain crosses the membrane as a helical span at residues 326–346; the sequence is VALGWAAAVVMGYFCAGGSAI. At 347–369 the chain is on the extracellular side; that stretch reads SGAHLNPSITLANLVYRGFPLKK. Positions 352-354 match the NPA 1 motif; that stretch reads NPS. The helical transmembrane segment at 370–390 threads the bilayer; sequence VPYYFAGQLIGAFTGALILFI. The Cytoplasmic segment spans residues 391–446; it reads WYKRVLQEAYSDWWMNESVAGMFCVFPKPYLSSGRQFFSEFLCGAMLQAGTFALTD. A helical transmembrane segment spans residues 447-467; it reads PYTCLSSDVFPLMMFILIFII. Residues 468 to 506 lie on the Extracellular side of the membrane; the sequence is NASMAYQTGTAMNLARDLGPRLALYAVGFDHKMLWVHHH. The NPA 2 signature appears at 480-482; the sequence is NLA. Residues 507–527 form a helical membrane-spanning segment; it reads HFFWVPMVGPFIGALMGGLVY. The Cytoplasmic segment spans residues 528 to 669; sequence DVCIYQGHES…SHYGNAKKVT (142 aa). Disordered stretches follow at residues 591-615 and 635-669; these read LQKT…VQFK and DSIE…KKVT. Over residues 638–655 the composition is skewed to polar residues; sequence ETASLGATTTDSIGLSDT.

It belongs to the MIP/aquaporin (TC 1.A.8) family.

It localises to the membrane. Its function is as follows. Channel protein for glycerol. Has a role in both glycerol influx and efflux. Plays a role in osmoregulation: under osmotic stress the channel is apparently closed to allow accumulation of glycerol in the cell under hyperosmotic conditions. The chain is Glycerol uptake/efflux facilitator protein (FPS1) from Saccharomyces cerevisiae (strain ATCC 204508 / S288c) (Baker's yeast).